We begin with the raw amino-acid sequence, 152 residues long: Transcriptional repressor NrdR (152 aa).

The segment at 1–21 (MRCPFCGNGDTQVKDSRPTED) is disordered. Residues 3 to 34 (CPFCGNGDTQVKDSRPTEDSAAIRRRRFCPAC) fold into a zinc finger. Residues 12 to 21 (QVKDSRPTED) are compositionally biased toward basic and acidic residues. The ATP-cone domain occupies 49 to 139 (LVIVKKDGQR…VYRNFREAKD (91 aa)).

The protein belongs to the NrdR family. The cofactor is Zn(2+).

Functionally, negatively regulates transcription of bacterial ribonucleotide reductase nrd genes and operons by binding to NrdR-boxes. The chain is Transcriptional repressor NrdR from Rhodospirillum rubrum (strain ATCC 11170 / ATH 1.1.1 / DSM 467 / LMG 4362 / NCIMB 8255 / S1).